Consider the following 498-residue polypeptide: Glycerol kinase (498 aa).

Residue T12 participates in ADP binding. Residues T12, T13, and S14 each contribute to the ATP site. A sn-glycerol 3-phosphate-binding site is contributed by T12. R16 is a binding site for ADP. Sn-glycerol 3-phosphate-binding residues include R82, E83, Y135, and D245. Glycerol-binding residues include R82, E83, Y135, D245, and Q246. Residues T267 and G310 each contribute to the ADP site. The ATP site is built by T267, G310, Q314, and G411. ADP is bound by residues G411 and N415.

This sequence belongs to the FGGY kinase family. As to quaternary structure, homotetramer and homodimer (in equilibrium).

It catalyses the reaction glycerol + ATP = sn-glycerol 3-phosphate + ADP + H(+). It functions in the pathway polyol metabolism; glycerol degradation via glycerol kinase pathway; sn-glycerol 3-phosphate from glycerol: step 1/1. Activated by phosphorylation and inhibited by fructose 1,6-bisphosphate (FBP). Its function is as follows. Key enzyme in the regulation of glycerol uptake and metabolism. Catalyzes the phosphorylation of glycerol to yield sn-glycerol 3-phosphate. This Clostridium botulinum (strain Alaska E43 / Type E3) protein is Glycerol kinase.